We begin with the raw amino-acid sequence, 523 residues long: GMP synthase [glutamine-hydrolyzing] (523 aa).

Residues 8-205 (KILILDFGSQ…VVNICGCETK (198 aa)) form the Glutamine amidotransferase type-1 domain. Cysteine 85 functions as the Nucleophile in the catalytic mechanism. Catalysis depends on residues histidine 179 and glutamate 181. The GMPS ATP-PPase domain occupies 206 to 398 (WTAENIIEDA…LGLPAEMINR (193 aa)). ATP is bound at residue 233-239 (SGGVDSS).

In terms of assembly, homodimer.

The catalysed reaction is XMP + L-glutamine + ATP + H2O = GMP + L-glutamate + AMP + diphosphate + 2 H(+). It participates in purine metabolism; GMP biosynthesis; GMP from XMP (L-Gln route): step 1/1. In terms of biological role, catalyzes the synthesis of GMP from XMP. The sequence is that of GMP synthase [glutamine-hydrolyzing] from Haemophilus influenzae (strain PittEE).